The sequence spans 517 residues: Amidophosphoribosyltransferase (517 aa).

Met-1 is subject to N-acetylmethionine. Residues 1-11 (MELEESGIREE) constitute a propeptide that is removed on maturation. The active-site Nucleophile is Cys-12. The Glutamine amidotransferase type-2 domain occupies 12–261 (CGVFGCIASG…PGEIVEISRH (250 aa)). Cys-280 is a binding site for [4Fe-4S] cluster. Mg(2+)-binding residues include Ser-327, Asp-389, and Asp-390. Positions 426, 503, and 506 each coordinate [4Fe-4S] cluster.

It in the C-terminal section; belongs to the purine/pyrimidine phosphoribosyltransferase family. In terms of assembly, homotetramer. The cofactor is Mg(2+). It depends on [4Fe-4S] cluster as a cofactor. As to expression, expressed at a high level in brain, heart, liver and stomach.

The enzyme catalyses 5-phospho-beta-D-ribosylamine + L-glutamate + diphosphate = 5-phospho-alpha-D-ribose 1-diphosphate + L-glutamine + H2O. Its pathway is purine metabolism; IMP biosynthesis via de novo pathway; N(1)-(5-phospho-D-ribosyl)glycinamide from 5-phospho-alpha-D-ribose 1-diphosphate: step 1/2. With respect to regulation, activated by the substrate 5-phospho-alpha-D-ribosyl-1-pyrophosphate and inhibited by the purine ribonucleotides, the end products of purine biosynthesis. In terms of biological role, catalyzes the formation of phosphoribosylamine from phosphoribosylpyrophosphate (PRPP) and glutamine. This Rattus norvegicus (Rat) protein is Amidophosphoribosyltransferase (Ppat).